We begin with the raw amino-acid sequence, 91 residues long: DNA-directed RNA polymerase subunit omega (91 aa).

This sequence belongs to the RNA polymerase subunit omega family. In terms of assembly, the RNAP catalytic core consists of 2 alpha, 1 beta, 1 beta' and 1 omega subunit. When a sigma factor is associated with the core the holoenzyme is formed, which can initiate transcription.

The enzyme catalyses RNA(n) + a ribonucleoside 5'-triphosphate = RNA(n+1) + diphosphate. In terms of biological role, promotes RNA polymerase assembly. Latches the N- and C-terminal regions of the beta' subunit thereby facilitating its interaction with the beta and alpha subunits. This is DNA-directed RNA polymerase subunit omega from Pectobacterium atrosepticum (strain SCRI 1043 / ATCC BAA-672) (Erwinia carotovora subsp. atroseptica).